Reading from the N-terminus, the 414-residue chain is MDLLRLREKGIFLSQRRRKWLIFMAISGVSGYGAYKVYHLPSVARKRKRLFKLFGAIVSVAELISDSAETLSMVSRDVKDFLNSDSDEIPNSLKQIAKITTSNEFTDSLSRVSQAVTIGAFRGYKSESSIGDSGIEKSSDSSVVDRVIDKVFSEAGTGFVSVVVGSFAKNLVLGFYSGKVESGVKCEGSDSSETPRWVTLLGDDKCRELLADCIERFTSTAIGVYLDKTMDINTYDQIFEGLTNPKHQDSVKDVLVSVCNGALETIVRTSHDVFTSSRSKNVIEEIEDDDFKSNGSARSKMVSESGDGVKSNGWTEAIATTLAVPSNRRFMFDVTGRVTLETTRSIIAFIMVKTFQGFRKSINVVHEEVTDRGRQAVEYVGAKSSVIITVCLALYLHIISGCVRNSPIGVSQHF.

The next 2 helical transmembrane spans lie at 20–40 and 379–399; these read WLIF…VYHL and YVGA…LHII.

The protein resides in the membrane. The polypeptide is Protein PHLOEM PROTEIN 2-LIKE A10 (PP2A10) (Arabidopsis thaliana (Mouse-ear cress)).